Here is a 353-residue protein sequence, read N- to C-terminus: 3-dehydroquinate synthase (353 aa).

Residues 62–67, 96–100, 120–121, Lys-133, and Lys-142 contribute to the NAD(+) site; these read DGEQYK, GVIGD, and TT. Positions 175, 236, and 253 each coordinate Zn(2+).

This sequence belongs to the sugar phosphate cyclases superfamily. Dehydroquinate synthase family. The cofactor is NAD(+). Co(2+) is required as a cofactor. It depends on Zn(2+) as a cofactor.

The protein localises to the cytoplasm. The catalysed reaction is 7-phospho-2-dehydro-3-deoxy-D-arabino-heptonate = 3-dehydroquinate + phosphate. The protein operates within metabolic intermediate biosynthesis; chorismate biosynthesis; chorismate from D-erythrose 4-phosphate and phosphoenolpyruvate: step 2/7. Catalyzes the conversion of 3-deoxy-D-arabino-heptulosonate 7-phosphate (DAHP) to dehydroquinate (DHQ). The chain is 3-dehydroquinate synthase from Helicobacter hepaticus (strain ATCC 51449 / 3B1).